Here is a 352-residue protein sequence, read N- to C-terminus: Maleylacetate reductase (352 aa).

Residues 93-94 and 115-119 each bind NAD(+); these read GS and TTYAG.

The protein belongs to the iron-containing alcohol dehydrogenase family. The maleylacetate reductase family of enzymes does not require any metal ion for activity, despite being related to the family III metal-dependent polyol dehydrogenases. serves as cofactor.

It carries out the reaction 3-oxoadipate + NAD(+) = maleylacetate + NADH + H(+). The protein operates within xenobiotic degradation; gamma-hexachlorocyclohexane degradation. Functionally, catalyzes the NADH-dependent reduction of maleylacetate to beta-ketoadipate, a step in the degradation of gamma-hexachlorocyclohexane (gamma-HCH or lindane). Has an essential role in this assimilation pathway that allows S.japonicum UT26 to grow on gamma-HCH as the sole source of carbon and energy. This is Maleylacetate reductase from Sphingobium indicum (strain DSM 16413 / CCM 7287 / MTCC 6362 / UT26 / NBRC 101211 / UT26S) (Sphingobium japonicum).